Consider the following 285-residue polypeptide: MKILLFLCFLVSVAFAKPPTIQLKSNTKSQNGFIVGGTEAVDGDAPHQVSLQHTSHFCGGSIISERWILTAAHCIDADDLSNPGGMSVRYNTLNLKSGTLVKVKSIKVHEQYSNVTSDNDIALLETVASMNLNQTNAVAAKLPAKGNDPQDGDLFLSGWGTLHSGDTTIPTNLQKVTVPLTNRSVCAEAYTGIVNITENMFCAGKMGIGGVDSCQGDSGGGAMLNKELVGVVSFGVGCGDPKYPGVYTRVSQYLDWIELSAKSSATTLVAVNITLFLTLFIGAIW.

The N-terminal stretch at 1 to 16 is a signal peptide; the sequence is MKILLFLCFLVSVAFA. The propeptide occupies 17–33; that stretch reads KPPTIQLKSNTKSQNGF. Positions 34–262 constitute a Peptidase S1 domain; that stretch reads IVGGTEAVDG…YLDWIELSAK (229 aa). Cysteine 58 and cysteine 74 are oxidised to a cystine. Residues histidine 73 and aspartate 120 each act as charge relay system in the active site. Disulfide bonds link cysteine 186–cysteine 202 and cysteine 214–cysteine 238. The active-site Charge relay system is serine 218.

It belongs to the peptidase S1 family.

It is found in the secreted. It catalyses the reaction Preferential cleavage: Arg-|-Xaa, Lys-|-Xaa.. Inhibited by the serine protease inhibitor phenylmethylsulfonyl, and trypsin inhibitors soybean trypsin inhibitor and tosyllysine chloromethyl ketone. Not inhibited by dithiothreitol, a cysteine protease inhibitor. Functionally, digests TAMe (p-toluene arginine methyl ester), but not ethyl N-benzoyl-L-tyrosinate (BTEE). The sequence is that of Trypsin Tyr p 3.0101 from Tyrophagus putrescentiae (Mold mite).